The sequence spans 174 residues: Shikimate kinase 2 (174 aa).

An ATP-binding site is contributed by 12–17 (GAGKTT). Mg(2+) is bound by residues Thr16 and Asp32. Asp34, Arg58, and Gly79 together coordinate substrate. The segment at 112 to 126 (AEDPEEAQRPSLTGK) is LID domain. Residue Arg120 coordinates ATP. Position 139 (Arg139) interacts with substrate. Residue Gln155 participates in ATP binding.

Belongs to the shikimate kinase family. AroL subfamily. As to quaternary structure, monomer. Requires Mg(2+) as cofactor.

It is found in the cytoplasm. It catalyses the reaction shikimate + ATP = 3-phosphoshikimate + ADP + H(+). It participates in metabolic intermediate biosynthesis; chorismate biosynthesis; chorismate from D-erythrose 4-phosphate and phosphoenolpyruvate: step 5/7. In terms of biological role, catalyzes the specific phosphorylation of the 3-hydroxyl group of shikimic acid using ATP as a cosubstrate. The sequence is that of Shikimate kinase 2 from Yersinia pestis bv. Antiqua (strain Antiqua).